Here is a 465-residue protein sequence, read N- to C-terminus: Asparagine--tRNA ligase (465 aa).

The protein belongs to the class-II aminoacyl-tRNA synthetase family. Homodimer.

Its subcellular location is the cytoplasm. The catalysed reaction is tRNA(Asn) + L-asparagine + ATP = L-asparaginyl-tRNA(Asn) + AMP + diphosphate + H(+). This Pseudoalteromonas translucida (strain TAC 125) protein is Asparagine--tRNA ligase.